A 730-amino-acid polypeptide reads, in one-letter code: Polyphosphate kinase (730 aa).

Over residues 1-21 (MMRHDRNVTEIDAETRPDENL) the composition is skewed to basic and acidic residues. The interval 1-39 (MMRHDRNVTEIDAETRPDENLWHSGDSAVGAPPAATPAA) is disordered. Asn-86 is a binding site for ATP. Mg(2+) is bound by residues Arg-423 and Arg-453. His-483 functions as the Phosphohistidine intermediate in the catalytic mechanism. Residues Tyr-516, Arg-612, and His-640 each coordinate ATP.

Belongs to the polyphosphate kinase 1 (PPK1) family. Mg(2+) is required as a cofactor. In terms of processing, an intermediate of this reaction is the autophosphorylated ppk in which a phosphate is covalently linked to a histidine residue through a N-P bond.

It carries out the reaction [phosphate](n) + ATP = [phosphate](n+1) + ADP. In terms of biological role, catalyzes the reversible transfer of the terminal phosphate of ATP to form a long-chain polyphosphate (polyP). The chain is Polyphosphate kinase from Mycolicibacterium paratuberculosis (strain ATCC BAA-968 / K-10) (Mycobacterium paratuberculosis).